Consider the following 289-residue polypeptide: Serine/threonine-protein phosphatase Pgam5, mitochondrial (289 aa).

Residues 7–23 (FACGTGAGLLTFYLTKL) form a helical membrane-spanning segment.

The protein belongs to the phosphoglycerate mutase family. BPG-dependent PGAM subfamily. As to quaternary structure, interacts with Pk92B/ASK1.

The protein localises to the mitochondrion outer membrane. The enzyme catalyses O-phospho-L-seryl-[protein] + H2O = L-seryl-[protein] + phosphate. It carries out the reaction O-phospho-L-threonyl-[protein] + H2O = L-threonyl-[protein] + phosphate. Displays phosphatase activity for serine/threonine residues, and dephosphorylates and activates Pk92B kinase. Has apparently no phosphoglycerate mutase activity. This chain is Serine/threonine-protein phosphatase Pgam5, mitochondrial (Pgam5), found in Drosophila pseudoobscura pseudoobscura (Fruit fly).